We begin with the raw amino-acid sequence, 325 residues long: GMP reductase (325 aa).

Residue C174 is the Thioimidate intermediate of the active site. 203–226 (MIADGGIRTHGDIAKSIRFGASMV) is a binding site for NADP(+).

This sequence belongs to the IMPDH/GMPR family. GuaC type 2 subfamily.

It catalyses the reaction IMP + NH4(+) + NADP(+) = GMP + NADPH + 2 H(+). Functionally, catalyzes the irreversible NADPH-dependent deamination of GMP to IMP. It functions in the conversion of nucleobase, nucleoside and nucleotide derivatives of G to A nucleotides, and in maintaining the intracellular balance of A and G nucleotides. This chain is GMP reductase, found in Staphylococcus carnosus (strain TM300).